The primary structure comprises 470 residues: Poly(A) polymerase catalytic subunit (470 aa).

Residues Asp-192 and Asp-194 contribute to the active site.

The protein belongs to the poxviridae poly(A) polymerase catalytic subunit family. As to quaternary structure, heterodimer of a large (catalytic) subunit and a small (regulatory) subunit.

It catalyses the reaction RNA(n) + ATP = RNA(n)-3'-adenine ribonucleotide + diphosphate. Polymerase that creates the 3'-poly(A) tail of mRNA's. This is Poly(A) polymerase catalytic subunit (PAPL) from Erythrocebus patas (Red guenon).